Reading from the N-terminus, the 1375-residue chain is Ubiquitin carboxyl-terminal hydrolase 47 (1375 aa).

Position 122 is an N6-acetyllysine (Lys122). The USP domain occupies Val188–Lys564. The Nucleophile role is filled by Cys197. Residues Asp425–Asn452 form a disordered region. Positions Gln430–Asn452 are enriched in polar residues. Catalysis depends on His503, which acts as the Proton acceptor. At Ser832 the chain carries Phosphoserine. Disordered regions lie at residues Thr840–Val859, Leu880–Ser968, and Asn983–Lys1024. Residues Ser882–Ser899 show a composition bias toward low complexity. Ser910 is subject to Phosphoserine. The segment covering Leu912–Gln928 has biased composition (basic and acidic residues). Over residues His929–Phe938 the composition is skewed to polar residues. A Phosphoserine modification is found at Ser933. Positions Ser940–Asn950 are enriched in basic and acidic residues. Positions Ser953 to Ser968 are enriched in low complexity. The span at Lys997–Trp1006 shows a compositional bias: basic and acidic residues. Positions Asp1007 to Asp1020 are enriched in acidic residues. Ser1013 bears the Phosphoserine mark. Thr1015 bears the Phosphothreonine mark. At Ser1017 the chain carries Phosphoserine.

Belongs to the peptidase C19 family. Interacts with BTRC and FBXW11. Interacts with POLB. Expressed in skeletal muscle, heart and testis.

The protein resides in the cytoplasm. The catalysed reaction is Thiol-dependent hydrolysis of ester, thioester, amide, peptide and isopeptide bonds formed by the C-terminal Gly of ubiquitin (a 76-residue protein attached to proteins as an intracellular targeting signal).. Ubiquitin-specific protease that specifically deubiquitinates monoubiquitinated DNA polymerase beta (POLB), stabilizing POLB thereby playing a role in base-excision repair (BER). Acts as a regulator of cell growth and genome integrity. May also indirectly regulate CDC25A expression at a transcriptional level. This is Ubiquitin carboxyl-terminal hydrolase 47 (USP47) from Homo sapiens (Human).